The sequence spans 1048 residues: Probable histidine kinase 2 (1048 aa).

Over 1–16 (MREVEEVSKWRRRCCY) the chain is Cytoplasmic. The helical transmembrane segment at 17 to 37 (FWILFPLAVIATCMTITVVTF) threads the bilayer. The Extracellular portion of the chain corresponds to 38 to 336 (CSSTMYMTEV…AMVGVFRRGG (299 aa)). Residues 337–357 (VTMVAVACAAAAAATVACVLM) form a helical membrane-spanning segment. At 358–1048 (ARALRRAVAR…AVHGVCKGKN (691 aa)) the chain is on the cytoplasmic side. Positions 398 to 662 (SASHDIRSAL…CFGFNVLLKT (265 aa)) constitute a Histidine kinase domain. Histidine 401 bears the Phosphohistidine; by autocatalysis mark. The 133-residue stretch at 912 to 1044 (HVLLVEDTLV…RIVEAVHGVC (133 aa)) folds into the Response regulatory domain. Aspartate 975 bears the 4-aspartylphosphate mark.

Activation probably requires a transfer of a phosphate group between a His in the transmitter domain and an Asp of the receiver domain.

It localises to the cell membrane. The catalysed reaction is ATP + protein L-histidine = ADP + protein N-phospho-L-histidine.. Its function is as follows. Cytokinin receptor related to bacterial two-component regulators. Functions as a histidine kinase and transmits the stress signal to a downstream MAPK cascade. The protein is Probable histidine kinase 2 of Oryza sativa subsp. indica (Rice).